The following is an 865-amino-acid chain: Adenylate cyclase (865 aa).

Positions 1–540 (MYLYIETLKQ…DISSHFPIRL (540 aa)) are catalytic. The tract at residues 546–865 (KALYSPCEIR…FNDYQAVHHH (320 aa)) is regulatory.

It belongs to the adenylyl cyclase class-1 family.

It is found in the cytoplasm. The enzyme catalyses ATP = 3',5'-cyclic AMP + diphosphate. The sequence is that of Adenylate cyclase (cya) from Proteus mirabilis.